The sequence spans 1227 residues: Codanin-1 (1227 aa).

Residue alanine 2 is modified to N-acetylalanine. A disordered region spans residues 63 to 294 (RVLPQGPPTP…SLTDEPADPA (232 aa)). Threonine 71 is modified (phosphothreonine). Positions 128 to 137 (ARERGGRGLE) are enriched in basic and acidic residues. The span at 155-167 (GSGSPSRPSLTLS) shows a compositional bias: low complexity. The segment at 188-208 (PTGTKPSRRINPTPVSEERSL) is interaction with ASF1A/B. Residues 214–232 (CFTSPPISCVPSSQPSALD) are compositionally biased toward polar residues. The segment covering 247–260 (LQEEREMLRKERSK) has biased composition (basic and acidic residues). Residues serine 265 and serine 285 each carry the phosphoserine modification. 2 helical membrane-spanning segments follow: residues 312–332 (CIAE…FQLL) and 626–646 (FAVV…VAFL).

In terms of assembly, found in a cytosolic complex with ASF1A, ASF1B, IPO4 and histones H3.1 and H4. In terms of tissue distribution, ubiquitously expressed. Isoform 3 is not found in erythroid cells.

It is found in the cytoplasm. The protein localises to the nucleus. It localises to the membrane. In terms of biological role, may act as a negative regulator of ASF1 in chromatin assembly. In Homo sapiens (Human), this protein is Codanin-1 (CDAN1).